A 283-amino-acid chain; its full sequence is Thymidylate synthase (283 aa).

Arg-22 provides a ligand contact to dUMP. Cys-160 (nucleophile) is an active-site residue. DUMP-binding positions include 180–183, Asn-191, and 221–223; these read RSCD and HIY. Asp-183 contacts (6R)-5,10-methylene-5,6,7,8-tetrahydrofolate. Ser-282 contacts (6R)-5,10-methylene-5,6,7,8-tetrahydrofolate.

Belongs to the thymidylate synthase family. Bacterial-type ThyA subfamily. Homodimer.

It localises to the cytoplasm. The catalysed reaction is dUMP + (6R)-5,10-methylene-5,6,7,8-tetrahydrofolate = 7,8-dihydrofolate + dTMP. It participates in pyrimidine metabolism; dTTP biosynthesis. In terms of biological role, catalyzes the reductive methylation of 2'-deoxyuridine-5'-monophosphate (dUMP) to 2'-deoxythymidine-5'-monophosphate (dTMP) while utilizing 5,10-methylenetetrahydrofolate (mTHF) as the methyl donor and reductant in the reaction, yielding dihydrofolate (DHF) as a by-product. This enzymatic reaction provides an intracellular de novo source of dTMP, an essential precursor for DNA biosynthesis. The chain is Thymidylate synthase from Haemophilus influenzae (strain 86-028NP).